A 367-amino-acid chain; its full sequence is Inner membrane amino-acid ABC transporter permease protein YhdY (367 aa).

Over 1–36 (MTKVLLSHPPRPASHNSSRAMVWVRKNLFSSWSNSL) the chain is Cytoplasmic. A helical transmembrane segment spans residues 37–57 (LTIGCIWLMWELIPPLLNWAF). The Periplasmic portion of the chain corresponds to 58 to 99 (LQANWVGSTRADCTKAGACWVFIHERFGQFMYGLYPHDQRWR). The chain crosses the membrane as a helical span at residues 100 to 120 (INLALLIGLVSIAPMFWKILP). Over 121–125 (HRGRY) the chain is Cytoplasmic. Residues 126–146 (IAAWAVIYPLIVWWLMYGGFF) traverse the membrane as a helical segment. The Periplasmic portion of the chain corresponds to 147-162 (ALERVETRQWGGLTLT). Positions 159–353 (LTLTLIIASV…IFCFSMSRYS (195 aa)) constitute an ABC transmembrane type-1 domain. Residues 163 to 183 (LIIASVGIAGALPWGILLALG) traverse the membrane as a helical segment. The Cytoplasmic portion of the chain corresponds to 184-192 (RRSHMPIVR). The chain crosses the membrane as a helical span at residues 193-213 (ILSVIFIEFWRGVPLITVLFM). Over 214–233 (SSVMLPLFMAEGTSIDKLIR) the chain is Periplasmic. A helical membrane pass occupies residues 234–254 (ALVGVILFQSAYVAEVVRGGL). Residues 255-291 (QALPKGQYEAAESLALGYWKTQGLVILPQALKLVIPG) are Cytoplasmic-facing. The chain crosses the membrane as a helical span at residues 292–312 (LVNTIIALFKDTSLVIIIGLF). The Periplasmic portion of the chain corresponds to 313–326 (DLFSSVQQATVDPA). The chain crosses the membrane as a helical span at residues 327 to 347 (WLGMSTEGYVFAALIYWIFCF). Topologically, residues 348–367 (SMSRYSQYLEKRFNTGRTPH) are cytoplasmic.

The protein belongs to the binding-protein-dependent transport system permease family. HisMQ subfamily.

The protein localises to the cell inner membrane. Functionally, probably part of the binding-protein-dependent transport system YdhWXYZ for an amino acid; probably responsible for the translocation of the substrate across the membrane. In Escherichia coli (strain K12), this protein is Inner membrane amino-acid ABC transporter permease protein YhdY (yhdY).